A 587-amino-acid chain; its full sequence is Inorganic phosphate transporter 2-1, chloroplastic (587 aa).

The transit peptide at 1 to 71 directs the protein to the chloroplast; the sequence is MTLPYRFSSV…VCPLASFSSY (71 aa). The tract at residues 74–106 is disordered; that stretch reads SEGEEQHHADQPIQNPHESSTVSNESDGKGNAE. The span at 85 to 98 shows a compositional bias: polar residues; it reads PIQNPHESSTVSNE. 12 helical membrane passes run 127–147, 154–174, 195–215, 233–253, 265–285, 289–309, 327–347, 352–372, 413–433, 465–485, 523–543, and 559–579; these read AISIVIAFSALTLPIFMKSLG, TKLLSYATLLFGFYMAWNIGA, AVMTAAVLEFSGALLMGTHVT, MLLFAGLLSSLAAAGTWLQVA, CIVGSMVGFGLVYGGAGAVFW, AKVASSWVISPILGALVSFLV, AAAAAPVAVFVGVASISSAAL, IFPIALSQALACGVAGAIVFD, LEIVYGIFGYMQVLSACFMSF, IVIPMDVLAWGGFGIVAGLTM, LGLPISATHTLVGAVMGVGFA, and ASWLVTIPVGATLAVIYTWIF.

The protein belongs to the inorganic phosphate transporter (PiT) (TC 2.A.20.2) family. Mostly expressed in young green tissues. Present in both auto- and heterotrophic tissues. Also expressed in root stele.

It is found in the plastid. The protein localises to the chloroplast inner membrane. In terms of biological role, low affinity H(+)/Pi chloroplastic cotransporter. Involved in inorganic phosphate (orthophosphate, Pi) uptake in green parts of plants in Pi-sufficient conditions. Required for Pi retranslocation during Pi deprivation. The polypeptide is Inorganic phosphate transporter 2-1, chloroplastic (PHT2-1) (Arabidopsis thaliana (Mouse-ear cress)).